The following is a 1771-amino-acid chain: Fatty acid synthase alpha subunit pkiB (1771 aa).

Residues 108 to 130 are compositionally biased toward polar residues; the sequence is SQPTQPQFEPTSPSHLTKRSPSP. Positions 108–133 are disordered; sequence SQPTQPQFEPTSPSHLTKRSPSPSKA. The 79-residue stretch at 143–221 folds into the Carrier domain; sequence ELTLQAGHVI…ESFQPEFSGI (79 aa). S181 bears the O-(pantetheine 4'-phosphoryl)serine mark. A beta-ketoacyl reductase region spans residues 575 to 771; that stretch reads HKAVLVTGAG…CGAVIGWTRG (197 aa). A Ketosynthase family 3 (KS3) domain is found at 1011–1531; the sequence is KELLHEVAVE…QKGAINIMVS (521 aa). Residues C1197, H1416, and H1457 each act as for beta-ketoacyl synthase activity in the active site. Mg(2+) contacts are provided by D1650, V1651, and E1652. Acetyl-CoA contacts are provided by residues 1650–1652, Y1676, S1686, 1695–1705, 1719–1722, and 1753–1755; these read DVE, EAAFKSLQTTS, EVGG, and ISH. Residues S1754 and H1755 each contribute to the Mg(2+) site.

The protein belongs to the thiolase-like superfamily. Fungal fatty acid synthetase subunit alpha family. In terms of assembly, [Alpha(6)beta(6)] hexamers of two multifunctional subunits (alpha and beta).

The catalysed reaction is acetyl-CoA + n malonyl-CoA + 2n NADPH + 4n H(+) = a long-chain-acyl-CoA + n CoA + n CO2 + 2n NADP(+).. The enzyme catalyses a fatty acyl-[ACP] + malonyl-[ACP] + H(+) = a 3-oxoacyl-[ACP] + holo-[ACP] + CO2. It carries out the reaction a (3R)-hydroxyacyl-[ACP] + NADP(+) = a 3-oxoacyl-[ACP] + NADPH + H(+). The protein operates within secondary metabolite biosynthesis. Its function is as follows. Fatty acid synthase alpha subunit; part of the pki gene cluster that mediates the biosynthesis of 2,4-dihydroxy-3-methyl-6-(2-oxoundecyl)benzaldehyde. The first step in the pathway is the generation of the decanoyl starter unit by the FAS composed of subunits pkiB and pkiC, which is then transferred directly from the FAS to the SAT domain of the non-reducing polyketide synthase pkiA. PkiA condenses the decanoyyl starter unit with 4 malonyl-CoA units and performs one methylation step to yield 2,4-dihydroxy-3-methyl-6-(2-oxoundecyl)benzaldehyde. The protein is Fatty acid synthase alpha subunit pkiB of Emericella nidulans (strain FGSC A4 / ATCC 38163 / CBS 112.46 / NRRL 194 / M139) (Aspergillus nidulans).